The chain runs to 544 residues: Chaperonin GroEL (544 aa).

Residues 30-33, lysine 51, 87-91, glycine 415, 479-481, and aspartate 495 contribute to the ATP site; these read TLGP, DGTTT, and NAA.

Belongs to the chaperonin (HSP60) family. In terms of assembly, forms a cylinder of 14 subunits composed of two heptameric rings stacked back-to-back. Interacts with the co-chaperonin GroES.

The protein localises to the cytoplasm. The enzyme catalyses ATP + H2O + a folded polypeptide = ADP + phosphate + an unfolded polypeptide.. In terms of biological role, together with its co-chaperonin GroES, plays an essential role in assisting protein folding. The GroEL-GroES system forms a nano-cage that allows encapsulation of the non-native substrate proteins and provides a physical environment optimized to promote and accelerate protein folding. This Acinetobacter baylyi (strain ATCC 33305 / BD413 / ADP1) protein is Chaperonin GroEL.